A 362-amino-acid chain; its full sequence is Adenosine deaminase (362 aa).

Zn(2+)-binding residues include His19 and His21. Residues His21, Asp23, and Gly181 each coordinate substrate. Residue His208 coordinates Zn(2+). Glu211 acts as the Proton donor in catalysis. Asp300 lines the Zn(2+) pocket.

Belongs to the metallo-dependent hydrolases superfamily. Adenosine and AMP deaminases family. Adenosine deaminase subfamily. Zn(2+) serves as cofactor.

The enzyme catalyses adenosine + H2O + H(+) = inosine + NH4(+). It catalyses the reaction 2'-deoxyadenosine + H2O + H(+) = 2'-deoxyinosine + NH4(+). Functionally, catalyzes the hydrolytic deamination of adenosine and 2-deoxyadenosine. In Mycobacterium leprae (strain TN), this protein is Adenosine deaminase.